Here is a 342-residue protein sequence, read N- to C-terminus: MLKFIQNNREITALLAVLLLFVLPGFLDRQYLSVQTLTMVYSSAQILILLAMGATLVMLTRNIDVSVGSITGMCAVLLGMLLNAGYSLPVACVATLLLGLLAGFFNGVLVAWLKIPAIVATLGTLGLYRGIMLLWTGGKWIEGLPAELKQLSAPLLLGVSAIGWLTIILVAFMAWLLAKTAFGRSFYATGDNLQGARQLGVRTEAIRIVAFSLNGCMAALAGIVFASQIGFIPNQTGTGLEMKAIAACVLGGISLLGGSGAIIGAVLGAWFLTQIDSVLVLLRIPAWWNDFIAGLVLLAVLVFDGRLRCALELNLRRQKYARFMTPPPSVKPASSGKKREAA.

At 1–13 (MLKFIQNNREITA) the chain is on the periplasmic side. The helical transmembrane segment at 14–34 (LLAVLLLFVLPGFLDRQYLSV) threads the bilayer. Residues 35 to 38 (QTLT) lie on the Cytoplasmic side of the membrane. A helical transmembrane segment spans residues 39-59 (MVYSSAQILILLAMGATLVML). Residues 60 to 69 (TRNIDVSVGS) are Periplasmic-facing. Residues 70 to 90 (ITGMCAVLLGMLLNAGYSLPV) form a helical membrane-spanning segment. At 91–92 (AC) the chain is on the cytoplasmic side. A helical membrane pass occupies residues 93-113 (VATLLLGLLAGFFNGVLVAWL). Lys-114 is a topological domain (periplasmic). The chain crosses the membrane as a helical span at residues 115-135 (IPAIVATLGTLGLYRGIMLLW). Residues 136 to 154 (TGGKWIEGLPAELKQLSAP) are Cytoplasmic-facing. The chain crosses the membrane as a helical span at residues 155 to 175 (LLLGVSAIGWLTIILVAFMAW). Residues 176 to 212 (LLAKTAFGRSFYATGDNLQGARQLGVRTEAIRIVAFS) are Periplasmic-facing. The helical transmembrane segment at 213–233 (LNGCMAALAGIVFASQIGFIP) threads the bilayer. Residues 234–251 (NQTGTGLEMKAIAACVLG) lie on the Cytoplasmic side of the membrane. A helical membrane pass occupies residues 252–272 (GISLLGGSGAIIGAVLGAWFL). Topologically, residues 273–283 (TQIDSVLVLLR) are periplasmic. Residues 284 to 304 (IPAWWNDFIAGLVLLAVLVFD) traverse the membrane as a helical segment. The Cytoplasmic segment spans residues 305 to 342 (GRLRCALELNLRRQKYARFMTPPPSVKPASSGKKREAA).

Belongs to the binding-protein-dependent transport system permease family. AraH/RbsC subfamily. The complex is composed of two ATP-binding proteins (LsrA), two transmembrane proteins (LsrC and LsrD) and a solute-binding protein (LsrB).

Its subcellular location is the cell inner membrane. Functionally, part of the ABC transporter complex LsrABCD involved in autoinducer 2 (AI-2) import. Probably responsible for the translocation of the substrate across the membrane. The sequence is that of Autoinducer 2 import system permease protein LsrC (lsrC) from Escherichia coli O157:H7.